A 337-amino-acid chain; its full sequence is Ribosomal RNA small subunit methyltransferase C (337 aa).

This sequence belongs to the methyltransferase superfamily. RsmC family. In terms of assembly, monomer.

The protein localises to the cytoplasm. The catalysed reaction is guanosine(1207) in 16S rRNA + S-adenosyl-L-methionine = N(2)-methylguanosine(1207) in 16S rRNA + S-adenosyl-L-homocysteine + H(+). Its function is as follows. Specifically methylates the guanine in position 1207 of 16S rRNA in the 30S particle. The sequence is that of Ribosomal RNA small subunit methyltransferase C from Acinetobacter baumannii (strain AB307-0294).